Here is a 444-residue protein sequence, read N- to C-terminus: L-seryl-tRNA(Sec) selenium transferase (444 aa).

Lys284 is modified (N6-(pyridoxal phosphate)lysine).

This sequence belongs to the SelA family. It depends on pyridoxal 5'-phosphate as a cofactor.

Its subcellular location is the cytoplasm. It carries out the reaction L-seryl-tRNA(Sec) + selenophosphate + H(+) = L-selenocysteinyl-tRNA(Sec) + phosphate. It participates in aminoacyl-tRNA biosynthesis; selenocysteinyl-tRNA(Sec) biosynthesis; selenocysteinyl-tRNA(Sec) from L-seryl-tRNA(Sec) (bacterial route): step 1/1. Functionally, converts seryl-tRNA(Sec) to selenocysteinyl-tRNA(Sec) required for selenoprotein biosynthesis. The sequence is that of L-seryl-tRNA(Sec) selenium transferase from Wolinella succinogenes (strain ATCC 29543 / DSM 1740 / CCUG 13145 / JCM 31913 / LMG 7466 / NCTC 11488 / FDC 602W) (Vibrio succinogenes).